Here is a 439-residue protein sequence, read N- to C-terminus: MTEKVTVIGAGLAGSEAAWQLAKRGIKVDLYEMRPKKMTPAHESGNFAELVCTNSMRSNQLSNAVGLLKEEMRQMDSLIMQAADACQVPAGGALAVDRELFSRYVTDKLTSLPEVIIHDEEITDLPSEGITVIATGPLTSDSLAEKIQDFEGAESLHFFDAAAPIIAADSIDMDIVYKKSRYDRGEAAYLNCPMTKEEYDRFANALVHAETAEIHGFENSEVFEGCMPIEVMAARGAKTLLFGPLKPVGLENPKDGKTPYAVVQLRQDNAAASMYNIVGFQTHLKYGEQKRVFQMIPGLENARFVRYGKMHRNTYMASPEVLKASYEAKKRPGLFFAGQMTGVEGYVESAGSGLVAGINAAREALGQETVEFPVTTALGSMAHYITTTDAKHFQPMNASFALIPGLEGKKIRNKRERHEKISERGLADLAAFKAEKLDD.

9–14 serves as a coordination point for FAD; sequence GAGLAG.

This sequence belongs to the MnmG family. TrmFO subfamily. It depends on FAD as a cofactor.

It is found in the cytoplasm. It carries out the reaction uridine(54) in tRNA + (6R)-5,10-methylene-5,6,7,8-tetrahydrofolate + NADH + H(+) = 5-methyluridine(54) in tRNA + (6S)-5,6,7,8-tetrahydrofolate + NAD(+). The catalysed reaction is uridine(54) in tRNA + (6R)-5,10-methylene-5,6,7,8-tetrahydrofolate + NADPH + H(+) = 5-methyluridine(54) in tRNA + (6S)-5,6,7,8-tetrahydrofolate + NADP(+). Catalyzes the folate-dependent formation of 5-methyl-uridine at position 54 (M-5-U54) in all tRNAs. In Lactobacillus delbrueckii subsp. bulgaricus (strain ATCC BAA-365 / Lb-18), this protein is Methylenetetrahydrofolate--tRNA-(uracil-5-)-methyltransferase TrmFO.